The chain runs to 176 residues: Ribosome maturation factor RimP (176 aa).

It belongs to the RimP family.

The protein localises to the cytoplasm. Its function is as follows. Required for maturation of 30S ribosomal subunits. This Chlorobium limicola (strain DSM 245 / NBRC 103803 / 6330) protein is Ribosome maturation factor RimP.